The sequence spans 373 residues: 3-isopropylmalate dehydrogenase (373 aa).

Residue 82–93 (GPKWGTGALRPE) coordinates NAD(+). R100, R110, R139, and D231 together coordinate substrate. 3 residues coordinate Mg(2+): D231, D256, and D260. Position 295 to 306 (295 to 306 (GSAPDLPANKVN)) interacts with NAD(+).

It belongs to the isocitrate and isopropylmalate dehydrogenases family. In terms of assembly, homodimer. Mg(2+) serves as cofactor. Mn(2+) is required as a cofactor.

The protein resides in the cytoplasm. The enzyme catalyses (2R,3S)-3-isopropylmalate + NAD(+) = 4-methyl-2-oxopentanoate + CO2 + NADH. The protein operates within amino-acid biosynthesis; L-leucine biosynthesis; L-leucine from 3-methyl-2-oxobutanoate: step 3/4. Its function is as follows. Catalyzes the oxidation of 3-carboxy-2-hydroxy-4-methylpentanoate (3-isopropylmalate) to 3-carboxy-4-methyl-2-oxopentanoate. The product decarboxylates to 4-methyl-2 oxopentanoate. The chain is 3-isopropylmalate dehydrogenase (LEU2) from Candida maltosa (Yeast).